Here is a 285-residue protein sequence, read N- to C-terminus: Homeobox protein Hox-A4 (285 aa).

Disordered regions lie at residues 19-70 and 94-130; these read PFEE…APRA and ASPG…TTPA. Gly residues predominate over residues 27–41; it reads GGPGGGDGAVGGGPG. Residues 44–70 are compositionally biased toward low complexity; the sequence is RPQSAPHLPAPNPHAARQPPAYYAPRA. Positions 106 to 118 are enriched in pro residues; it reads GAHPSPAPQPPVP. Residues 159–164 carry the Antp-type hexapeptide motif; sequence VYPWMK. The homeobox DNA-binding region spans 180 to 239; the sequence is PKRSRTAYTRQQVLELEKEFHFNRYLTRRRRIEIAHTLCLSERQVKIWFQNRRMKWKKDH. The interval 238-285 is disordered; that stretch reads DHKLPNTKMRSSNTASAPAGPPGKAQTHSPHHHPHPLPGASTPIPSSI.

Belongs to the Antp homeobox family. Deformed subfamily.

The protein resides in the nucleus. In terms of biological role, sequence-specific transcription factor which is part of a developmental regulatory system that provides cells with specific positional identities on the anterior-posterior axis. Binds to sites in the 5'-flanking sequence of its coding region with various affinities. The consensus sequences of the high and low affinity binding sites are 5'-TAATGA[CG]-3' and 5'-CTAATTTT-3'. The polypeptide is Homeobox protein Hox-A4 (Hoxa4) (Mus musculus (Mouse)).